The primary structure comprises 228 residues: 7-cyano-7-deazaguanine synthase (228 aa).

ATP is bound at residue 9–19 (LSGGPDSTTVL). 4 residues coordinate Zn(2+): Cys-193, Cys-203, Cys-206, and Cys-209.

Belongs to the QueC family. It depends on Zn(2+) as a cofactor.

It catalyses the reaction 7-carboxy-7-deazaguanine + NH4(+) + ATP = 7-cyano-7-deazaguanine + ADP + phosphate + H2O + H(+). It participates in purine metabolism; 7-cyano-7-deazaguanine biosynthesis. Functionally, catalyzes the ATP-dependent conversion of 7-carboxy-7-deazaguanine (CDG) to 7-cyano-7-deazaguanine (preQ(0)). This chain is 7-cyano-7-deazaguanine synthase, found in Rickettsia africae (strain ESF-5).